The following is a 252-amino-acid chain: Hydroxyacylglutathione hydrolase (252 aa).

H54, H56, D58, H59, H111, D130, and H170 together coordinate Zn(2+).

It belongs to the metallo-beta-lactamase superfamily. Glyoxalase II family. As to quaternary structure, monomer. Zn(2+) is required as a cofactor.

The catalysed reaction is an S-(2-hydroxyacyl)glutathione + H2O = a 2-hydroxy carboxylate + glutathione + H(+). Its pathway is secondary metabolite metabolism; methylglyoxal degradation; (R)-lactate from methylglyoxal: step 2/2. In terms of biological role, thiolesterase that catalyzes the hydrolysis of S-D-lactoyl-glutathione to form glutathione and D-lactic acid. The chain is Hydroxyacylglutathione hydrolase from Francisella philomiragia subsp. philomiragia (strain ATCC 25017 / CCUG 19701 / FSC 153 / O#319-036).